Reading from the N-terminus, the 327-residue chain is Dolichyl-phosphate beta-glucosyltransferase ALG5D (327 aa).

The Lumenal portion of the chain corresponds to 1 to 6; the sequence is MEKQLA. The chain crosses the membrane as a helical span at residues 7–27; that stretch reads ELSVYILIIFLILGFIMAILM. Residues 28-327 lie on the Cytoplasmic side of the membrane; it reads RFGDDTTLFD…NIWTIRDRKF (300 aa).

The protein belongs to the glycosyltransferase 2 family.

The protein resides in the endoplasmic reticulum membrane. It carries out the reaction a di-trans,poly-cis-dolichyl phosphate + UDP-alpha-D-glucose = a di-trans,poly-cis-dolichyl beta-D-glucosyl phosphate + UDP. Its pathway is protein modification; protein glycosylation. In terms of biological role, dolichyl-phosphate beta-glucosyltransferase involved in the glycosylation of glycoproteins through the synthesis of dolichyl beta-D-glucosyl phosphate which serves as a sugar donor for transfer of three glucose residues to the Man-9-GlcNAc-2-PP-dolichol precursor to N-glycans. The protein is Dolichyl-phosphate beta-glucosyltransferase ALG5D of Trichomonas vaginalis (strain ATCC PRA-98 / G3).